The primary structure comprises 495 residues: Phytochrome A type 5 (495 aa).

Over residues 1 to 21 the composition is skewed to low complexity; sequence MSSSRPASSSSSRNRQSSQAR. Positions 1 to 24 are disordered; it reads MSSSRPASSSSSRNRQSSQARVLA. The GAF domain occupies 217–402; it reads SMEMLCNTVV…VFAVHVNREF (186 aa). Position 322 (cysteine 322) interacts with phytochromobilin.

This sequence belongs to the phytochrome family. Homodimer. Post-translationally, contains one covalently linked phytochromobilin chromophore.

Functionally, regulatory photoreceptor which exists in two forms that are reversibly interconvertible by light: the Pr form that absorbs maximally in the red region of the spectrum and the Pfr form that absorbs maximally in the far-red region. Photoconversion of Pr to Pfr induces an array of morphogenic responses, whereas reconversion of Pfr to Pr cancels the induction of those responses. Pfr controls the expression of a number of nuclear genes including those encoding the small subunit of ribulose-bisphosphate carboxylase, chlorophyll A/B binding protein, protochlorophyllide reductase, rRNA, etc. It also controls the expression of its own gene(s) in a negative feedback fashion. In Avena sativa (Oat), this protein is Phytochrome A type 5 (PHYA5).